A 205-amino-acid polypeptide reads, in one-letter code: GTP cyclohydrolase-2 (205 aa).

Residue 49-53 (RIHSE) participates in GTP binding. The Zn(2+) site is built by Cys-54, Cys-65, and Cys-67. GTP-binding positions include Gln-70, 92 to 94 (EGR), and Thr-114. Asp-126 functions as the Proton acceptor in the catalytic mechanism. The active-site Nucleophile is Arg-128. The GTP site is built by Thr-149 and Lys-154.

Belongs to the GTP cyclohydrolase II family. It depends on Zn(2+) as a cofactor.

It catalyses the reaction GTP + 4 H2O = 2,5-diamino-6-hydroxy-4-(5-phosphoribosylamino)-pyrimidine + formate + 2 phosphate + 3 H(+). The protein operates within cofactor biosynthesis; riboflavin biosynthesis; 5-amino-6-(D-ribitylamino)uracil from GTP: step 1/4. Its function is as follows. Catalyzes the conversion of GTP to 2,5-diamino-6-ribosylamino-4(3H)-pyrimidinone 5'-phosphate (DARP), formate and pyrophosphate. The sequence is that of GTP cyclohydrolase-2 from Shewanella woodyi (strain ATCC 51908 / MS32).